The following is a 34-amino-acid chain: Trypsin inhibitor 1 (34 aa).

Residues 1 to 34 constitute a cross-link (cyclopeptide (Ser-Gly)); it reads SGSDGGVCPKILQRCRRDSDCPGACICRGNGYCG. 3 cysteine pairs are disulfide-bonded: Cys-8/Cys-25, Cys-15/Cys-27, and Cys-21/Cys-33.

Post-translationally, this is a cyclic peptide.

It localises to the secreted. Functionally, inhibits trypsin; probably participates in a plant defense mechanism. The sequence is that of Trypsin inhibitor 1 from Momordica cochinchinensis (Spiny bitter cucumber).